The primary structure comprises 304 residues: Non-specific ribonucleoside hydrolase RihC (304 aa).

The active site involves His233.

This sequence belongs to the IUNH family. RihC subfamily.

Hydrolyzes both purine and pyrimidine ribonucleosides with a broad-substrate specificity. This is Non-specific ribonucleoside hydrolase RihC from Shigella flexneri serotype 5b (strain 8401).